A 432-amino-acid polypeptide reads, in one-letter code: Adenylosuccinate synthetase (432 aa).

GTP-binding positions include 13–19 and 41–43; these read GDEGKGK and GHT. Asp-14 (proton acceptor) is an active-site residue. Positions 14 and 41 each coordinate Mg(2+). IMP contacts are provided by residues 14-17, 39-42, Thr-130, Arg-144, Gln-225, Thr-240, and Arg-304; these read DEGK and NAGH. Catalysis depends on His-42, which acts as the Proton donor. 300-306 serves as a coordination point for substrate; that stretch reads ATTGRRR. GTP is bound by residues Arg-306, 332 to 334, and 415 to 417; these read KLD and STG.

It belongs to the adenylosuccinate synthetase family. As to quaternary structure, homodimer. Mg(2+) is required as a cofactor.

The protein localises to the cytoplasm. The enzyme catalyses IMP + L-aspartate + GTP = N(6)-(1,2-dicarboxyethyl)-AMP + GDP + phosphate + 2 H(+). It functions in the pathway purine metabolism; AMP biosynthesis via de novo pathway; AMP from IMP: step 1/2. Plays an important role in the de novo pathway of purine nucleotide biosynthesis. Catalyzes the first committed step in the biosynthesis of AMP from IMP. The chain is Adenylosuccinate synthetase from Escherichia coli (strain K12).